The following is a 165-amino-acid chain: Type 3 secretion system regulator YopR (165 aa).

The tract at residues 2 to 11 (TVTLNRGSIT) is 5' secretion signal. The segment at 131–149 (PYLSELINKELMILLPYNS) is 3' secretion signal.

It belongs to the YopR family.

It is found in the secreted. Its function is as follows. May be involved in the regulation of the assembly of the type III secretion system (T3SS), also called injectisome, which is used to inject bacterial effector proteins into eukaryotic host cells. May control the secretion and/or polymerization of YscF/SctF, the principal component of the needle filament, thereby impacting the assembly of the T3SS. Involved in pathogenesis. Essential for the establishment of Yersinia infections in a mouse model system. The chain is Type 3 secretion system regulator YopR from Yersinia enterocolitica.